The chain runs to 585 residues: Bestrophin-1 (585 aa).

The Cytoplasmic segment spans residues 1-31 (MTITYTSQVANARLGSFSRLLLCWRGSIYKL). Ala10 provides a ligand contact to Ca(2+). Residues 32-51 (LYGEFLIFLLCYYIIRFIYR) form a helical membrane-spanning segment. The Extracellular portion of the chain corresponds to 52–60 (LALTEEQQL). Residues 61–82 (MFEKLTLYCDSYIQLIPISFVL) traverse the membrane as a helical segment. Residues 83 to 237 (GFYVTLVVTR…DWISIPLVYT (155 aa)) lie on the Cytoplasmic side of the membrane. A helical transmembrane segment spans residues 238-255 (QVVTVAVYSFFLTCLVGR). Topologically, residues 256-274 (QFLNPAKAYPGHELDLVVP) are extracellular. Residues 275-288 (VFTFLQFFFYVGWL) form a helical membrane-spanning segment. Residues 289 to 585 (KVAEQLINPF…ALENRDEAHS (297 aa)) lie on the Cytoplasmic side of the membrane. Residues Gln293, Asn296, Asp301, and Asp304 each coordinate Ca(2+). The tract at residues 346-379 (PYTAASAQFRRASFMGSTFNISLNKEEMEFQPNQ) is auto-inhibitory segment.

It belongs to the anion channel-forming bestrophin (TC 1.A.46) family. Calcium-sensitive chloride channel subfamily. As to quaternary structure, interacts with YWHAG; this interaction promotes the ligand-gated L-glutamate channel activity leading to the positive regulation of NMDA glutamate receptor activity through the L-glutamate secretion. In terms of tissue distribution, predominantly expressed in the basolateral membrane of the retinal pigment epithelium.

Its subcellular location is the cell membrane. The protein localises to the basolateral cell membrane. The enzyme catalyses chloride(in) = chloride(out). It catalyses the reaction hydrogencarbonate(in) = hydrogencarbonate(out). It carries out the reaction 4-aminobutanoate(in) = 4-aminobutanoate(out). The catalysed reaction is L-glutamate(out) = L-glutamate(in). Inactivated by sulfhydryl-reactive agents. Ligand-gated anion channel that allows the movement of anions across cell membranes when activated by calcium (Ca2+). Allows the movement of chloride and hydrogencarbonate. Found in a partially open conformation leading to significantly smaller chloride movement. Upon F2R/PAR-1 activation, the sequestered calcium is released into the cytosol of astrocytes, leading to the (Ca2+)-dependent release of L-glutamate into the synaptic cleft that targets the neuronal postsynaptic GRIN2A/NMDAR receptor resulting in the synaptic plasticity regulation. Upon activation of the norepinephrine-alpha-1 adrenergic receptor signaling pathway, transports as well D-serine than L-glutamate in a (Ca2+)-dependent manner, leading to activation of adjacent NMDAR receptors and therefore regulates the heterosynaptic long-term depression and metaplasticity during initial memory acquisition. Releases the 4-aminobutanoate neurotransmitter in a (Ca2+)-dependent manner, and participates in its tonic release from cerebellar glial cells. This is Bestrophin-1 from Homo sapiens (Human).